The following is a 453-amino-acid chain: Na(+)/H(+) antiporter NhaA 2 (453 aa).

The next 12 helical transmembrane spans lie at 23-43, 74-94, 111-131, 139-159, 168-188, 191-211, 214-234, 235-255, 316-336, 345-365, 386-406, and 419-439; these read FLHIEAVSGIVLLIAAVAALI, LHFWINDGLMTIFFLVVGMEI, LPMAAAVGGVAVPALLYLSFG, GWAVPTATDIAFAVGVLALLG, VFLLALAIIDDIIAVLIIAFF, GGLDYTGFGVALIGLLMVIGL, IGVGSAYAYVLPGAIVWLGIL, LTGAHPTLAGVVLGLMTPVTA, VAFGIMPVFALANAGVSLSGV, WVMIAVAVALVAGKPLGIVSV, IVLVGLLAGIGFTMSIFIANL, and LGVLSASLIAAVLGLTWGVWS.

The protein belongs to the NhaA Na(+)/H(+) (TC 2.A.33) antiporter family.

Its subcellular location is the cell inner membrane. The enzyme catalyses Na(+)(in) + 2 H(+)(out) = Na(+)(out) + 2 H(+)(in). Its function is as follows. Na(+)/H(+) antiporter that extrudes sodium in exchange for external protons. This is Na(+)/H(+) antiporter NhaA 2 from Pseudomonas putida (strain ATCC 700007 / DSM 6899 / JCM 31910 / BCRC 17059 / LMG 24140 / F1).